We begin with the raw amino-acid sequence, 512 residues long: Serine--tRNA ligase, cytoplasmic (512 aa).

The residue at position 1 (Met1) is an N-acetylmethionine. An interaction with tRNA region spans residues 9–61 (RVDKGGDPALIRETQEKRFKDPGLVDQLVKADSEWRRCRFRADNLNKLKNLCS). Ser241 bears the Phosphoserine mark. Residues Thr271 and Arg302 each contribute to the L-serine site. ATP contacts are provided by residues 302–304 (RQE) and 318–321 (VHQF). An N6-acetyllysine modification is found at Lys323. Glu325 contacts L-serine. 391–394 (ELVS) contributes to the ATP binding site. L-serine-binding residues include Asn427 and Thr429. A disordered region spans residues 472–512 (KPAPIDQEPSKKQKKQHEGSKKKAKEVTLESQLQNMEVTEA). Residues 479–499 (EPSKKQKKQHEGSKKKAKEVT) show a composition bias toward basic and acidic residues. The short motif at 482-494 (KKQKKQHEGSKKK) is the Nuclear localization signal element. The span at 500 to 512 (LESQLQNMEVTEA) shows a compositional bias: polar residues.

Belongs to the class-II aminoacyl-tRNA synthetase family. Type-1 seryl-tRNA synthetase subfamily. Homodimer. The tRNA molecule may bind across the dimer. Interacts with SIRT2. Interacts with METTL6; interaction is required for the tRNA N(3)-methylcytidine methyltransferase activity of METTL6.

It localises to the cytoplasm. The protein resides in the nucleus. It catalyses the reaction tRNA(Ser) + L-serine + ATP = L-seryl-tRNA(Ser) + AMP + diphosphate + H(+). The enzyme catalyses tRNA(Sec) + L-serine + ATP = L-seryl-tRNA(Sec) + AMP + diphosphate + H(+). The protein operates within aminoacyl-tRNA biosynthesis; selenocysteinyl-tRNA(Sec) biosynthesis; L-seryl-tRNA(Sec) from L-serine and tRNA(Sec): step 1/1. Functionally, catalyzes the attachment of serine to tRNA(Ser) in a two-step reaction: serine is first activated by ATP to form Ser-AMP and then transferred to the acceptor end of tRNA(Ser). Is probably also able to aminoacylate tRNA(Sec) with serine, to form the misacylated tRNA L-seryl-tRNA(Sec), which will be further converted into selenocysteinyl-tRNA(Sec). In the nucleus, binds to the VEGFA core promoter and prevents MYC binding and transcriptional activation by MYC. Recruits SIRT2 to the VEGFA promoter, promoting deacetylation of histone H4 at 'Lys-16' (H4K16). Thereby, inhibits the production of VEGFA and sprouting angiogenesis mediated by VEGFA. In Cricetulus griseus (Chinese hamster), this protein is Serine--tRNA ligase, cytoplasmic (SARS1).